The sequence spans 290 residues: MKRTPHLLAIQSHVVFGHAGNSAAVFPMQRIGVNVWPLNTVQFSNHTQYGQWAGEVLAPAQIPALVEGISNIGELGHCDAVLSGYLGSAEQGRAILAGVERIKAVNPKALYLCDPVMGHPEKGCIVPPEVSAFLLEEAAARADILCPNQLELDSFCGRRAQSLEDCVNMARSLLKRGPQVVVVKHLAYPGRAEDQFEMLLVTAEHSWHLRRPLLAFPRQPVGVGDLTSGLFLARVMLGDSWVQAFEFTAAAVHEVLLETQACASYELQLVRAQDRIAHPRVRFEAQLLAL.

Residues S12 and 47–48 (TQ) each bind substrate. ATP contacts are provided by residues D114, E151, K184, and 211 to 214 (RPLL). Residue D225 coordinates substrate.

It belongs to the pyridoxine kinase family. PdxY subfamily. As to quaternary structure, homodimer. Mg(2+) serves as cofactor.

It carries out the reaction pyridoxal + ATP = pyridoxal 5'-phosphate + ADP + H(+). The protein operates within cofactor metabolism; pyridoxal 5'-phosphate salvage; pyridoxal 5'-phosphate from pyridoxal: step 1/1. In terms of biological role, pyridoxal kinase involved in the salvage pathway of pyridoxal 5'-phosphate (PLP). Catalyzes the phosphorylation of pyridoxal to PLP. In Pseudomonas putida (strain GB-1), this protein is Pyridoxal kinase PdxY.